The sequence spans 329 residues: uncharacterized protein (329 aa).

The SIS domain occupies 37–180; the sequence is LAEKILGHSG…AMLLFHSRGV (144 aa). 52–57 is an ATP binding site; sequence GVGKSG. CBS domains lie at 206–265 and 274–329; these read MFPK…GGEV and MTAN…AGLL.

Belongs to the SIS family. GutQ/KpsF subfamily.

This is an uncharacterized protein from Chlamydia pneumoniae (Chlamydophila pneumoniae).